A 1515-amino-acid chain; its full sequence is Metal resistance protein YCF1 (1515 aa).

The Vacuolar segment spans residues 1–32 (MAGNLVSWACKLCRSPEGFGPISFYGDFTQCF). A helical transmembrane segment spans residues 33–53 (IDGVILNLSAIFMITFGIRDL). The Cytoplasmic segment spans residues 54-73 (VNLCKKKHSGIKYRRNWIIV). Residues 74–94 (SRMALVLLEIAFVSLASLNIS) form a helical membrane-spanning segment. The Vacuolar segment spans residues 95–99 (KEEAE). The chain crosses the membrane as a helical span at residues 100–120 (NFTIVSQYASTMLSLFVALAL). Topologically, residues 121-130 (HWIEYDRSVV) are cytoplasmic. The helical transmembrane segment at 131–151 (ANTVLLFYWLFETFGNFAKLI) threads the bilayer. The Vacuolar portion of the chain corresponds to 152–169 (NILIRHTYEGIWYSGQTG). Residues 170–190 (FILTLFQVITCASILLLEALP) form a helical membrane-spanning segment. The Cytoplasmic portion of the chain corresponds to 191 to 278 (KKPLMPHQHI…QKSNPSLSWA (88 aa)). Ser-251 carries the phosphoserine modification. A helical membrane pass occupies residues 279 to 299 (ICRTFGSKMLLAAFFKAIHDV). In terms of domain architecture, ABC transmembrane type-1 1 spans 287 to 590 (MLLAAFFKAI…IPMVLNSFIE (304 aa)). Residues 300–345 (LAFTQPQLLRILIKFVTDYNSERQDDHSSLQGFENNHPQKLPIVRG) lie on the Vacuolar side of the membrane. Residues 346–366 (FLIAFAMFLVGFTQTSVLHQY) traverse the membrane as a helical segment. Residues 367–422 (FLNVFNTGMYIKSALTALIYQKSLVLSNEASGLSSTGDIVNLMSVDVQKLQDLTQW) are Cytoplasmic-facing. The helical transmembrane segment at 423–443 (LNLIWSGPFQIIICLYSLYKL) threads the bilayer. Residues 444-446 (LGN) lie on the Vacuolar side of the membrane. A helical transmembrane segment spans residues 447–467 (SMWVGVIILVIMMPLNSFLMR). Residues 468-530 (IQKKLQKSQM…NLTKLGCYMA (63 aa)) lie on the Cytoplasmic side of the membrane. Residues 531-551 (VTSFQFNIVPFLVSCCTFAVF) form a helical membrane-spanning segment. Residues 552-572 (VYTEDRALTTDLVFPALTLFN) lie on the Vacuolar side of the membrane. The helical transmembrane segment at 573–593 (LLSFPLMIIPMVLNSFIEASV) threads the bilayer. Over 594-943 (SIGRLFTFFT…VKWNIYLEYA (350 aa)) the chain is Cytoplasmic. An ABC transporter 1 domain is found at 626–853 (INIGDDATFL…ADSPLWKLLN (228 aa)). An ATP-binding site is contributed by 663-670 (GKVGSGKT). Phosphoserine occurs at positions 873, 903, and 908. A Phosphothreonine modification is found at Thr-911. Phosphoserine is present on Ser-914. Residues 944 to 964 (KACNPKSVCVFILFIVISMFL) traverse the membrane as a helical segment. Residues 951-1235 (VCVFILFIVI…IVRMTVEVET (285 aa)) form the ABC transmembrane type-1 2 domain. Residues 965–1001 (SVMGNVWLKHWSEVNSRYGSNPNAARYLAIYFALGIG) lie on the Vacuolar side of the membrane. A helical transmembrane segment spans residues 1002–1023 (SALATLIQTIVLWVFCTIHASK). The Cytoplasmic segment spans residues 1024–1066 (YLHNLMTNSVLRAPMTFFETTPIGRILNRFSNDIYKVDALLGR). Residues 1067-1087 (TFSQFFVNAVKVTFTITVICA) form a helical membrane-spanning segment. A topological domain (vacuolar) is located at residue Thr-1088. Residues 1089 to 1109 (TWQFIFIIIPLSVFYIYYQQY) traverse the membrane as a helical segment. Residues 1110–1180 (YLRTSRELRR…NANRWLAYRL (71 aa)) are Cytoplasmic-facing. A helical membrane pass occupies residues 1181–1201 (ELIGSIIILGAATLSVFRLKQ). The Vacuolar portion of the chain corresponds to 1202–1205 (GTLT). Residues 1206-1226 (AGMVGLSLSYALQITQTLNWI) traverse the membrane as a helical segment. Topologically, residues 1227–1515 (VRMTVEVETN…CMEAGLVNEN (289 aa)) are cytoplasmic. The ABC transporter 2 domain maps to 1272–1507 (IKFNNYSTRY…NKSLFYSLCM (236 aa)). 1306–1313 (GRTGAGKS) is an ATP binding site.

This sequence belongs to the ABC transporter superfamily. ABCC family. Conjugate transporter (TC 3.A.1.208) subfamily.

It localises to the vacuole membrane. The catalysed reaction is Cd(2+)(in) + ATP + H2O = Cd(2+)(out) + ADP + phosphate + H(+). The enzyme catalyses an S-substituted glutathione(in) + ATP + H2O = an S-substituted glutathione(out) + ADP + phosphate + H(+). Functionally, cooperates for the ATP-dependent vacuolar transport of bilirubin and glutathione conjugates. The polypeptide is Metal resistance protein YCF1 (YCF1) (Saccharomyces cerevisiae (strain ATCC 204508 / S288c) (Baker's yeast)).